A 486-amino-acid polypeptide reads, in one-letter code: Membrane-bound lytic murein transglycosylase F (486 aa).

An N-terminal signal peptide occupies residues 1–28; sequence MFAHTLFRKRCAIWLLAIGIFLMLGSCA. Residues 29–267 are non-LT domain; sequence EKPSELERIK…RLRERYYGHV (239 aa). Residues 268-486 form an LT domain region; that stretch reads DVLGYVGAYA…TDLMEELPPL (219 aa). Glutamate 314 is a catalytic residue.

This sequence in the N-terminal section; belongs to the bacterial solute-binding protein 3 family. It in the C-terminal section; belongs to the transglycosylase Slt family.

Its subcellular location is the cell outer membrane. The catalysed reaction is Exolytic cleavage of the (1-&gt;4)-beta-glycosidic linkage between N-acetylmuramic acid (MurNAc) and N-acetylglucosamine (GlcNAc) residues in peptidoglycan, from either the reducing or the non-reducing ends of the peptidoglycan chains, with concomitant formation of a 1,6-anhydrobond in the MurNAc residue.. Murein-degrading enzyme that degrades murein glycan strands and insoluble, high-molecular weight murein sacculi, with the concomitant formation of a 1,6-anhydromuramoyl product. Lytic transglycosylases (LTs) play an integral role in the metabolism of the peptidoglycan (PG) sacculus. Their lytic action creates space within the PG sacculus to allow for its expansion as well as for the insertion of various structures such as secretion systems and flagella. This is Membrane-bound lytic murein transglycosylase F from Stutzerimonas stutzeri (strain A1501) (Pseudomonas stutzeri).